A 60-amino-acid chain; its full sequence is Large ribosomal subunit protein uL30 (60 aa).

It belongs to the universal ribosomal protein uL30 family. As to quaternary structure, part of the 50S ribosomal subunit.

This is Large ribosomal subunit protein uL30 from Mycobacteroides abscessus (strain ATCC 19977 / DSM 44196 / CCUG 20993 / CIP 104536 / JCM 13569 / NCTC 13031 / TMC 1543 / L948) (Mycobacterium abscessus).